The primary structure comprises 179 residues: Large ribosomal subunit protein uL5 (179 aa).

The protein belongs to the universal ribosomal protein uL5 family. Part of the 50S ribosomal subunit; part of the 5S rRNA/L5/L18/L25 subcomplex. Contacts the 5S rRNA and the P site tRNA. Forms a bridge to the 30S subunit in the 70S ribosome.

Functionally, this is one of the proteins that bind and probably mediate the attachment of the 5S RNA into the large ribosomal subunit, where it forms part of the central protuberance. In the 70S ribosome it contacts protein S13 of the 30S subunit (bridge B1b), connecting the 2 subunits; this bridge is implicated in subunit movement. Contacts the P site tRNA; the 5S rRNA and some of its associated proteins might help stabilize positioning of ribosome-bound tRNAs. This is Large ribosomal subunit protein uL5 from Prochlorococcus marinus (strain AS9601).